Consider the following 275-residue polypeptide: Dihydropteroate synthase (275 aa).

Residues 15–267 enclose the Pterin-binding domain; that stretch reads PQIMGILNFT…DVAATSDMLK (253 aa). Asparagine 22 is a Mg(2+) binding site. (7,8-dihydropterin-6-yl)methyl diphosphate is bound by residues threonine 62, aspartate 96, asparagine 115, aspartate 185, lysine 221, and 255–257; that span reads RVH.

It belongs to the DHPS family. In terms of assembly, homodimer. The cofactor is Mg(2+).

The enzyme catalyses (7,8-dihydropterin-6-yl)methyl diphosphate + 4-aminobenzoate = 7,8-dihydropteroate + diphosphate. It functions in the pathway cofactor biosynthesis; tetrahydrofolate biosynthesis; 7,8-dihydrofolate from 2-amino-4-hydroxy-6-hydroxymethyl-7,8-dihydropteridine diphosphate and 4-aminobenzoate: step 1/2. In terms of biological role, catalyzes the condensation of para-aminobenzoate (pABA) with 6-hydroxymethyl-7,8-dihydropterin diphosphate (DHPt-PP) to form 7,8-dihydropteroate (H2Pte), the immediate precursor of folate derivatives. The chain is Dihydropteroate synthase (folP-A) from Haemophilus influenzae (strain ATCC 51907 / DSM 11121 / KW20 / Rd).